A 315-amino-acid polypeptide reads, in one-letter code: Probable cytochrome c oxidase subunit 2 (315 aa).

3 helical membrane passes run Ile-54–Trp-74, Leu-96–Ile-116, and Val-133–Pro-153. Positions 235, 270, 274, and 278 each coordinate Cu cation.

It belongs to the cytochrome c oxidase subunit 2 family. Cu cation serves as cofactor. Heme is required as a cofactor.

It localises to the cell membrane. The catalysed reaction is 4 Fe(II)-[cytochrome c] + O2 + 8 H(+)(in) = 4 Fe(III)-[cytochrome c] + 2 H2O + 4 H(+)(out). Functionally, subunits I and II form the functional core of the enzyme complex. Electrons originating in cytochrome c are transferred via heme a and Cu(A) to the binuclear center formed by heme a3 and Cu(B). The chain is Probable cytochrome c oxidase subunit 2 (ctaC) from Rickettsia conorii (strain ATCC VR-613 / Malish 7).